Here is a 664-residue protein sequence, read N- to C-terminus: MTNELLIEIGTEELPAGVINPALDYLKDKINSLLNARQVKTYGTPRRLTLYFKDFENERKEKKEVIWGPPKNVAYDEKGNPTKALEGFLKKNNASLEEVKVLKKDKGEYVAIVRKVIEKSPIEKLQEEFEEILLSVPFPKRMRWTSSKRITFSRPVRWILALFNGQVLKLRFGELESSNKTYGHRFLSKGEVTINNPADYEKTLKEHYVIPDFNERKEIILRALEKSSQEVGGKPSYPEGLVEEVTNLVEYPFPVLGKFDEKYLELPPLVITTVAAHHQRFFCFEKDGKLLNYFLGISNNKPNEKIKEGYEKVLRARLEDALFFYREDLKKDLKSLIPELKKVLFHPKVGSMYEKEERMEKIAQKLCPLLKCEWEKVKEAVWLSKVDLLTEMVKELDELQGYMGYVYAKAQGYDEEVAKALWEQYFPRSLEDKVPETTTGTILSLSDKIDNLYSFFKAGEIPKGSSDPYGLRRSAFGIIKIVDVKNLDLNLEDFKEIYGEFKQYPKLVEFLKQRLISYLEDYPVDIVRAVLNVYSPMEPYKVINSVRVLYEASKSPEFPSVVEAAKRVIRIIPKDWKNYEVDEKLLSEEAERELYQKLTEFENKELKSPLELLPLKEYIDKFFDNVKVMAEDEKIRNNRISLLKRVENLFRTFGDFNEIVIKEG.

This sequence belongs to the class-II aminoacyl-tRNA synthetase family. Tetramer of two alpha and two beta subunits.

The protein localises to the cytoplasm. The enzyme catalyses tRNA(Gly) + glycine + ATP = glycyl-tRNA(Gly) + AMP + diphosphate. The polypeptide is Glycine--tRNA ligase beta subunit (glyS) (Aquifex aeolicus (strain VF5)).